Here is a 141-residue protein sequence, read N- to C-terminus: Large ribosomal subunit protein uL11 (141 aa).

The protein belongs to the universal ribosomal protein uL11 family. Part of the ribosomal stalk of the 50S ribosomal subunit. Interacts with L10 and the large rRNA to form the base of the stalk. L10 forms an elongated spine to which L12 dimers bind in a sequential fashion forming a multimeric L10(L12)X complex. Post-translationally, one or more lysine residues are methylated.

Forms part of the ribosomal stalk which helps the ribosome interact with GTP-bound translation factors. The chain is Large ribosomal subunit protein uL11 from Nautilia profundicola (strain ATCC BAA-1463 / DSM 18972 / AmH).